The sequence spans 135 residues: ATP synthase epsilon chain (135 aa).

The interval 84 to 107 (SLSEEKQSEEQKQRLERAKKALSS) is disordered. The segment covering 86-102 (SEEKQSEEQKQRLERAK) has biased composition (basic and acidic residues).

Belongs to the ATPase epsilon chain family. As to quaternary structure, F-type ATPases have 2 components, CF(1) - the catalytic core - and CF(0) - the membrane proton channel. CF(1) has five subunits: alpha(3), beta(3), gamma(1), delta(1), epsilon(1). CF(0) has three main subunits: a, b and c.

The protein resides in the cell membrane. In terms of biological role, produces ATP from ADP in the presence of a proton gradient across the membrane. The protein is ATP synthase epsilon chain of Elusimicrobium minutum (strain Pei191).